The following is a 339-amino-acid chain: Glycerol-3-phosphate dehydrogenase [NAD(P)+] (339 aa).

4 residues coordinate NADPH: S15, Y16, H36, and K110. Positions 110, 139, and 141 each coordinate sn-glycerol 3-phosphate. An NADPH-binding site is contributed by A143. Residues K195, D248, S258, R259, and N260 each contribute to the sn-glycerol 3-phosphate site. K195 serves as the catalytic Proton acceptor. R259 contacts NADPH. NADPH contacts are provided by V283 and E285.

It belongs to the NAD-dependent glycerol-3-phosphate dehydrogenase family.

It localises to the cytoplasm. It carries out the reaction sn-glycerol 3-phosphate + NAD(+) = dihydroxyacetone phosphate + NADH + H(+). The enzyme catalyses sn-glycerol 3-phosphate + NADP(+) = dihydroxyacetone phosphate + NADPH + H(+). It participates in membrane lipid metabolism; glycerophospholipid metabolism. Its function is as follows. Catalyzes the reduction of the glycolytic intermediate dihydroxyacetone phosphate (DHAP) to sn-glycerol 3-phosphate (G3P), the key precursor for phospholipid synthesis. In Serratia proteamaculans (strain 568), this protein is Glycerol-3-phosphate dehydrogenase [NAD(P)+].